We begin with the raw amino-acid sequence, 65 residues long: Putative potassium channel toxin Ts21 (65 aa).

The first 25 residues, 1–25, serve as a signal peptide directing secretion; sequence MNKVYLVAILVLSVLLVANVSPIEG. 3 cysteine pairs are disulfide-bonded: cysteine 31–cysteine 53, cysteine 38–cysteine 61, and cysteine 42–cysteine 63.

It belongs to the short scorpion toxin superfamily. Potassium channel inhibitor family. Alpha-KTx 11 subfamily. In terms of tissue distribution, expressed by the venom gland.

Its subcellular location is the secreted. Functionally, this recombinant toxin inhibits the mammalian voltage-gated potassium channels Kv1.3/KCNA3 in vitro with an IC(50) of 26.40 nM. This Tityus serrulatus (Brazilian scorpion) protein is Putative potassium channel toxin Ts21.